A 399-amino-acid chain; its full sequence is Acetylornithine aminotransferase (399 aa).

Residues 102–103 (GA) and phenylalanine 138 each bind pyridoxal 5'-phosphate. Arginine 141 contacts N(2)-acetyl-L-ornithine. Residue 223–226 (DEVQ) participates in pyridoxal 5'-phosphate binding. Lysine 252 carries the N6-(pyridoxal phosphate)lysine modification. Threonine 280 is a pyridoxal 5'-phosphate binding site.

Belongs to the class-III pyridoxal-phosphate-dependent aminotransferase family. ArgD subfamily. Homodimer. Requires pyridoxal 5'-phosphate as cofactor.

It localises to the cytoplasm. It catalyses the reaction N(2)-acetyl-L-ornithine + 2-oxoglutarate = N-acetyl-L-glutamate 5-semialdehyde + L-glutamate. It participates in amino-acid biosynthesis; L-arginine biosynthesis; N(2)-acetyl-L-ornithine from L-glutamate: step 4/4. This Ralstonia nicotianae (strain ATCC BAA-1114 / GMI1000) (Ralstonia solanacearum) protein is Acetylornithine aminotransferase.